A 236-amino-acid polypeptide reads, in one-letter code: Small ribosomal subunit protein uS2c (236 aa).

The protein belongs to the universal ribosomal protein uS2 family.

The protein resides in the plastid. Its subcellular location is the chloroplast. The sequence is that of Small ribosomal subunit protein uS2c (rps2) from Panax ginseng (Korean ginseng).